Reading from the N-terminus, the 448-residue chain is Deoxyguanosinetriphosphate triphosphohydrolase-like protein (448 aa).

The disordered stretch occupies residues 1–26 (MQINSSWQERFLADPPREKDHRPPFR). Residues 11–26 (FLADPPREKDHRPPFR) are compositionally biased toward basic and acidic residues. The 214-residue stretch at 59–272 (RLTHSLEVAQ…MELADDIAYA (214 aa)) folds into the HD domain.

The protein belongs to the dGTPase family. Type 2 subfamily.

The polypeptide is Deoxyguanosinetriphosphate triphosphohydrolase-like protein (Histophilus somni (strain 129Pt) (Haemophilus somnus)).